A 290-amino-acid polypeptide reads, in one-letter code: Dual-specificity RNA pseudouridine synthase RluF (290 aa).

The region spanning 7–72 (VRLNKYISES…EAEDLVLIAL (66 aa)) is the S4 RNA-binding domain. Interaction with RNA regions lie at residues 105 to 108 (RLDK) and 187 to 190 (RQIR). Asp-107 serves as the catalytic Nucleophile. A disordered region spans residues 243–290 (VKPKAKAKPKTAGIKRPVVKMEKTAEKGGRPASNGKRFTSPGRKKKGR). Over residues 261-271 (VKMEKTAEKGG) the composition is skewed to basic and acidic residues.

This sequence belongs to the pseudouridine synthase RsuA family. As to quaternary structure, monomer.

The enzyme catalyses uridine(2604) in 23S rRNA = pseudouridine(2604) in 23S rRNA. It carries out the reaction uridine(35) in tRNA(Tyr) = pseudouridine(35) in tRNA(Tyr). Its function is as follows. Dual specificity enzyme that catalyzes the synthesis of pseudouridine from uracil-2604 in 23S ribosomal RNA and from uracil-35 in the anticodon of tRNA(Tyr). Can, to a small extent, also react with uracil-2605. The protein is Dual-specificity RNA pseudouridine synthase RluF (rluF) of Escherichia coli (strain K12).